The following is a 3088-amino-acid chain: Protein prune homolog 2 (3088 aa).

Residue Met1 is modified to N-acetylmethionine. A DHH motif motif is present at residues 109–111; sequence GSS. Disordered regions lie at residues 433-468, 490-628, 673-759, 771-795, 846-909, 952-1080, 1192-1211, 1231-1371, 1413-1452, 1472-1491, 1515-1585, 1632-1698, 1741-1768, 1782-1813, 2089-2114, 2173-2215, 2240-2260, 2492-2542, 2589-2667, 2687-2710, 2814-2833, and 2841-2875; these read IRSSRSSKESSVFLSDDSPVGEGAGPHHTLLPGLDS, HFDL…EPAS, SSEQ…QGTN, SGRSPTAMPEPWGNPTDDGEPAAVA, SELL…PKTR, SNLG…SSYD, SDEHTKDSAPSEHHTLNEKS, SFML…LVAS, RDVQTGMSADNLQPKDTHEKHLMSQRNSGETTETSDGMNF, LEPENVGGGPPHRVPRSLDF, VKGS…QESE, DSFS…EESI, LDSSEPAENENKSNPFCDNQQSSPDPWT, VEKEKRSSPETGTTGDVAWQISPKASFPKNED, ILTHCEHDSNSQASDSPDICHDSEAK, YQAD…PDMA, QEPTPEGDGSWISDSFSPESQ, SDLP…KNED, TQLA…SELG, ALEEASGPVSQSQKSKSRGRAGPD, QSEGSILSDDNLDSPDEIDI, and PDEADSFEYTGHDPTANKDSGQESESIPEYTAEEE. A compositionally biased stretch (low complexity) spans 503-512; sequence SGQSQQSSHS. Positions 562–582 are enriched in basic and acidic residues; it reads SLVEHDEEFVQRQDSPRDNSE. Composition is skewed to polar residues over residues 613–625 and 673–684; these read MNSLVESSPSTEE and SSEQESVFQSPE. Residues 685 to 699 are compositionally biased toward basic and acidic residues; it reads SWKEHKPSSIDRRAS. Positions 750–759 are enriched in polar residues; it reads LPNTSPQGTN. Residues 846–857 are compositionally biased toward polar residues; that stretch reads SELLDNSPSEIN. Residues 865–876 are compositionally biased toward basic and acidic residues; it reads WGKKNNDSRDHI. The span at 881–894 shows a compositional bias: polar residues; sequence NPSSDLDHTWTNSK. Residues 895-909 show a composition bias toward basic and acidic residues; sequence PPKEDQNGLVDPKTR. Residues 964–977 are compositionally biased toward low complexity; that stretch reads DTNYSTSDSYTSPT. The segment covering 980 to 1000 has biased composition (basic and acidic residues); that stretch reads GDEKETEHKPFAKEEGFESKD. Composition is skewed to polar residues over residues 1001 to 1027 and 1037 to 1048; these read GNSTAEETDIPPQSLQQSSRNRISSGP and HTDNSSEINTTH. 5 stretches are compositionally biased toward basic and acidic residues: residues 1049–1062, 1192–1208, 1282–1293, 1314–1339, and 1425–1434; these read NLDENELKTEHTDG, SDEHTKDSAPSEHHTLN, HLDKQDTERETL, DPWKGHGDGQSESEKEAQGATDRGHL, and QPKDTHEKHL. Positions 1436 to 1450 are enriched in polar residues; the sequence is SQRNSGETTETSDGM. A compositionally biased stretch (polar residues) spans 1537–1585; sequence SSEYTHSSASSPELNDSSVALSSWGQQPSSGYQEENQGNWSEQNHQESE. Over residues 1687-1698 the composition is skewed to acidic residues; that stretch reads SDDDSVGGEESI. Polar residues predominate over residues 1752 to 1768; that stretch reads KSNPFCDNQQSSPDPWT. Composition is skewed to basic and acidic residues over residues 2516–2542 and 2604–2622; these read EKTIPTKEPEQIKSEYKEERCTEKNED and NERKGLSAEKMSSKSDTRS. Polar residues predominate over residues 2623-2632; that stretch reads SFESPAQDQS. A compositionally biased stretch (acidic residues) spans 2823-2833; that stretch reads DNLDSPDEIDI. The 162-residue stretch at 2895 to 3056 folds into the CRAL-TRIO domain; it reads DMKVIEPYRR…SIIKLDEELR (162 aa).

It belongs to the PPase class C family. Prune subfamily. In terms of tissue distribution, a high level of expression seen in the nervous system (brain, cerebellum and spinal cord) as well as adrenal gland. Expressed at high levels in noneuroblastoma, rhabdomyosarcoma, melanoma and some osteosarcoma cell lines, whereas at only low levels in cancer cell lines of liver, breast, thyroid and colon. Expression is significantly higher in favorable tumors than aggressive ones.

It is found in the cytoplasm. Functionally, may play an important role in regulating differentiation, survival and aggressiveness of the tumor cells. This chain is Protein prune homolog 2 (PRUNE2), found in Homo sapiens (Human).